Reading from the N-terminus, the 134-residue chain is Protein Turandot E (134 aa).

The N-terminal stretch at 1-38 (MSYTRTIHSSASILKMNSALQISCLLVVLGCLLGSGHC) is a signal peptide.

The protein belongs to the Turandot family.

Its subcellular location is the secreted. A humoral factor that may play a role in stress tolerance. This Drosophila sechellia (Fruit fly) protein is Protein Turandot E.